A 92-amino-acid chain; its full sequence is Small ribosomal subunit protein uS19c (92 aa).

This sequence belongs to the universal ribosomal protein uS19 family.

The protein resides in the plastid. It is found in the chloroplast. In terms of biological role, protein S19 forms a complex with S13 that binds strongly to the 16S ribosomal RNA. In Manihot esculenta (Cassava), this protein is Small ribosomal subunit protein uS19c.